A 209-amino-acid chain; its full sequence is Protein ASG7 (209 aa).

At 1–49 (MTTLASSIEHKTKHLAAPFENDENPWMKKYCCQCKSCKMSVPVQPWLPR) the chain is on the lumenal side. The chain crosses the membrane as a helical span at residues 50–70 (FFVFGILCPVFWLVNLLAWWF). Over 71–184 (LQYWQPHELE…LLRKTFRDWN (114 aa)) the chain is Cytoplasmic. A phosphoserine mark is found at serine 121, serine 123, and serine 125. Phosphothreonine is present on threonine 153. The chain crosses the membrane as a helical span at residues 185–205 (LRSLLGLLIDSILIIFVVLLC). At 206-209 (KKSR) the chain is on the lumenal side.

Its subcellular location is the endomembrane system. Required for receptor inhibition of inappropriately expressed a-factor receptor (STE3) in MAT a cells. Inhibits signaling by relocalizing the G protein beta-gamma (STE4-STE18) subunit to intracellular membranes. May also be a mechanism for the down-regulation of the mating pheromone response after the zygotic fusion event, promoting the transition of the new diploid cell to vegetative growth. The protein is Protein ASG7 (ASG7) of Saccharomyces cerevisiae (strain ATCC 204508 / S288c) (Baker's yeast).